Consider the following 86-residue polypeptide: Weak toxin 1 (86 aa).

The first 23 residues, 1–23 (MKTLLLTLVVVAIVCLDLGYTLT), serve as a signal peptide directing secretion. Intrachain disulfides connect C24-C45, C27-C32, C38-C63, C67-C78, and C79-C84.

This sequence belongs to the three-finger toxin family. Ancestral subfamily. Orphan group II sub-subfamily. As to expression, expressed by the venom gland.

It is found in the secreted. Its function is as follows. Binds with low affinity to muscular (alpha-1-beta-1-delta-epsilon/CHRNA1-CHRNB1-CHRND-CHRNE) and very low affinity to neuronal (alpha-7/CHRNA7) nicotinic acetylcholine receptor (nAChR). The polypeptide is Weak toxin 1 (Bungarus candidus (Malayan krait)).